The primary structure comprises 93 residues: Acylphosphatase (93 aa).

The 88-residue stretch at 6 to 93 (RAIVTVKGLV…GEFDTFDVRY (88 aa)) folds into the Acylphosphatase-like domain. Residues Arg21 and Asn39 contribute to the active site.

It belongs to the acylphosphatase family.

The enzyme catalyses an acyl phosphate + H2O = a carboxylate + phosphate + H(+). This is Acylphosphatase (acyP) from Geobacter metallireducens (strain ATCC 53774 / DSM 7210 / GS-15).